The primary structure comprises 386 residues: Pepsin A (386 aa).

The first 15 residues, Met1–Cys15, serve as a signal peptide directing secretion. Positions Ala16–Val60 are cleaved as a propeptide — activation peptide. A Peptidase A1 domain is found at Tyr74–Ala383. Residue Asp92 is part of the active site. Cystine bridges form between Cys105–Cys110 and Cys266–Cys270. Asp275 is an active-site residue. An intrachain disulfide couples Cys309 to Cys342.

This sequence belongs to the peptidase A1 family.

The protein resides in the secreted. It catalyses the reaction Preferential cleavage: hydrophobic, preferably aromatic, residues in P1 and P1' positions. Cleaves 1-Phe-|-Val-2, 4-Gln-|-His-5, 13-Glu-|-Ala-14, 14-Ala-|-Leu-15, 15-Leu-|-Tyr-16, 16-Tyr-|-Leu-17, 23-Gly-|-Phe-24, 24-Phe-|-Phe-25 and 25-Phe-|-Tyr-26 bonds in the B chain of insulin.. In terms of biological role, shows particularly broad specificity; although bonds involving phenylalanine and leucine are preferred, many others are also cleaved to some extent. This is Pepsin A (PGA) from Canis lupus familiaris (Dog).